A 306-amino-acid polypeptide reads, in one-letter code: Mitochondrial uncoupling protein 1 (306 aa).

3 Solcar repeats span residues 9-102 (LSLP…VKNL), 112-203 (VPLS…VKET), and 212-296 (DNVV…AKKY). Helical transmembrane passes span 15 to 35 (FACS…LDTA), 71 to 91 (LRSL…FGGL), 118 to 138 (ILAG…TDLV), 177 to 197 (TGLG…LASY), 218 to 238 (ILSG…VDVV), and 269 to 289 (YKGF…MFLT).

The protein belongs to the mitochondrial carrier (TC 2.A.29) family. In terms of tissue distribution, widely expressed.

Its subcellular location is the mitochondrion inner membrane. PUMPS are mitochondrial transporter proteins that create proton leaks across the inner mitochondrial membrane, thus uncoupling oxidative phosphorylation. This leads to a decrease in the efficiency of oxidative phosphorylation and an increase in heat production. Is involved in protecting plant cells against oxidative stress damage and maintaining the redox balance of the mitochondrial electron transport chain to facilitate photosynthetic metabolism. May play a regulatory role during photorespiration. The sequence is that of Mitochondrial uncoupling protein 1 (PUMP1) from Arabidopsis thaliana (Mouse-ear cress).